Reading from the N-terminus, the 292-residue chain is Protein-L-isoaspartate O-methyltransferase (292 aa).

Residues 1-76 (MTEKKRFPLS…AAAPSSNERA (76 aa)) form a disordered region. Polar residues predominate over residues 28-48 (NRSSTSGKVATPQTATQNASQ). The active site involves Ser138.

It belongs to the methyltransferase superfamily. L-isoaspartyl/D-aspartyl protein methyltransferase family.

The protein resides in the cytoplasm. The catalysed reaction is [protein]-L-isoaspartate + S-adenosyl-L-methionine = [protein]-L-isoaspartate alpha-methyl ester + S-adenosyl-L-homocysteine. Functionally, catalyzes the methyl esterification of L-isoaspartyl residues in peptides and proteins that result from spontaneous decomposition of normal L-aspartyl and L-asparaginyl residues. It plays a role in the repair and/or degradation of damaged proteins. The chain is Protein-L-isoaspartate O-methyltransferase from Janthinobacterium sp. (strain Marseille) (Minibacterium massiliensis).